The sequence spans 696 residues: Potassium voltage-gated channel subfamily KQT member 4 (696 aa).

Residues 1-20 (MAEAPPRRLGLGPPPGDAPR) are disordered. The Cytoplasmic segment spans residues 1–97 (MAEAPPRRLG…VYNVLERPRG (97 aa)). R94 serves as a coordination point for a 1,2-diacyl-sn-glycero-3-phospho-(1D-myo-inositol-4,5-bisphosphate). The helical transmembrane segment at 98–119 (WAFVYHVFIFLLVFSCLVLSVL) threads the bilayer. At 120–130 (STIQEHQELAN) the chain is on the extracellular side. Residues 131 to 153 (ECLLILEFVMIVVFGLEYIIRVW) form a helical membrane-spanning segment. Over 154-169 (SAGCCCRYRGWQGRFR) the chain is Cytoplasmic. A helical transmembrane segment spans residues 170-192 (FARKPFCVIDFIVFVASVAVIAA). K173 serves as a coordination point for a 1,2-diacyl-sn-glycero-3-phospho-(1D-myo-inositol-4,5-bisphosphate). Residues 193-203 (GTQGNIFATSA) lie on the Extracellular side of the membrane. A helical; Voltage-sensor membrane pass occupies residues 204–224 (LRSMRFLQILRMVRMDRRGGT). Residues R220, R221, K226, and S236 each contribute to the a 1,2-diacyl-sn-glycero-3-phospho-(1D-myo-inositol-4,5-bisphosphate) site. Residues 225-236 (WKLLGSVVYAHS) are Cytoplasmic-facing. The chain crosses the membrane as a helical span at residues 237–259 (KELITAWYIGFLVLIFASFLVYL). The Extracellular segment spans residues 260-271 (AEKDANSDFSSY). An intramembrane region (pore-forming) is located at residues 272–293 (ADSLWWGTITLTTIGYGDKTPH). Residue T294 is a topological domain, extracellular. A helical membrane pass occupies residues 295–323 (WLGRVLAAGFALLGISFFALPAGILGSGF). The Cytoplasmic segment spans residues 324–696 (ALKVQEQHRQ…ISRSVSTNMD (373 aa)). A 1,2-diacyl-sn-glycero-3-phospho-(1D-myo-inositol-4,5-bisphosphate) is bound by residues H331 and K334. Positions 343 to 352 (AANLIQAAWR) are interaction with CALM. The tract at residues 445 to 484 (SSQKRTGPSKQHLAPPPIPTSPSSEQVGEASSPSKVQKSW) is disordered. The segment covering 465 to 484 (SPSSEQVGEASSPSKVQKSW) has biased composition (polar residues). An interaction with CALM region spans residues 536–550 (RSVRILKFLVAKRKF). The interval 547–651 (KRKFKETLRP…SRCLRSGTSA (105 aa)) is C-terminal assembly domain (tetramerization). Residues 589–609 (GRGPGDRKTREKGDKGPSDTE) are disordered. The segment covering 592–606 (PGDRKTREKGDKGPS) has biased composition (basic and acidic residues). Residues 610–645 (AVDEISMMGRVVKVEKQVQSIEHKLDLLLGFYSRCL) adopt a coiled-coil conformation.

This sequence belongs to the potassium channel family. KQT (TC 1.A.1.15) subfamily. Kv7.4/KCNQ4 sub-subfamily. In terms of assembly, homotetramer. Interacts (via C-terminus) with calmodulin; forms a heterooctameric structure (with 4:4 KCNQ1:CALM stoichiometry); the interaction is calcium-independent, constitutive, participates in the proper assembly of a functional channel. The interaction with calcium-free CALM controls channel trafficking whereas interaction with calcium-bound CALM regulates channel gating. May form a functional heteromultimeric channel with KCNQ3. Interacts with HSP90AB1; promotes cell surface expression of KCNQ4. As to expression, in the inner ear expressed in the outer sensory hair cells of the cochlea and in type I hair cells of the vestibular organs. Also expressed in the postsynaptic membrane of the calyx nerve endings innervating type I cells. In the brain expressed in neurons of many, but not all, nuclei of the central auditory pathway. Absent from most other brain regions.

It localises to the basal cell membrane. It catalyses the reaction K(+)(in) = K(+)(out). Its activity is regulated as follows. Two molecules of phosphatidylinositol-4,5-bisphosphate (PIP2-I and PIP2-II) are essential to activate KCNQ4 channel by inducing the coupling of the voltage-sensing domain (VSD) and the pore-forming domain (PD). Upon channel activation, PIP2-I and PIP2-II disrupt the VSD-calmodulin/CALM interaction, causing the release of CALM from the VSD which triggers the opening of the gate. Calcium suppresses KCNQ4 channel current through calcium-bound CALM C-terminus. Therefore CALM acts as calcium sensor that controls channel activity. Pore-forming subunit of the voltage-gated potassium (Kv) channel involved in the regulation of sensory cells excitability in the cochlea. KCNQ4/Kv7.4 channel is composed of 4 pore-forming subunits assembled as tetramers. Promotes the outflow of potassium ions in the repolarization phase of action potential which plays a role in regulating membrane potential of excitable cells. The channel conducts a slowly activating and deactivating current. Current often shows some inward rectification at positive potentials. Channel may be selectively permeable in vitro to other cations besides potassium, in decreasing order of affinity K(+) = Rb(+) &gt; Cs(+) &gt; Na(+). Important for normal physiological function of inner ear such as sensory perception of sound. This Mus musculus (Mouse) protein is Potassium voltage-gated channel subfamily KQT member 4.